A 257-amino-acid polypeptide reads, in one-letter code: Folate receptor alpha (257 aa).

Residues 1 to 24 (MAQRMTTQLLLLLVWVAVVGEAQT) form the signal peptide. Intrachain disulfides connect Cys37/Cys65, Cys57/Cys105, Cys66/Cys109, Cys89/Cys175, Cys96/Cys146, Cys135/Cys209, Cys139/Cys189, and Cys152/Cys169. Asn69 carries N-linked (GlcNAc...) asparagine glycosylation. Folate-binding positions include Asp103, Tyr107, 124–128 (WRKER), 157–162 (HKGWNW), and Ser196. An N-linked (GlcNAc...) asparagine glycan is attached at Asn161. Asn201 carries an N-linked (GlcNAc...) asparagine glycan. The GPI-anchor amidated serine moiety is linked to residue Ser234. Positions 235–257 (GAGPWAAWPFLLSLALMLLWLLS) are cleaved as a propeptide — removed in mature form.

This sequence belongs to the folate receptor family. The secreted form is derived from the membrane-bound form either by cleavage of the GPI anchor, or/and by proteolysis catalyzed by a metalloprotease. In terms of tissue distribution, primarily expressed in tissues of epithelial origin. Expression is increased in malignant tissues. Expressed in kidney, lung and cerebellum. Detected in placenta and thymus epithelium.

Its subcellular location is the cell membrane. The protein localises to the apical cell membrane. It is found in the basolateral cell membrane. The protein resides in the secreted. It localises to the cytoplasmic vesicle. Its subcellular location is the clathrin-coated vesicle. The protein localises to the endosome. Functionally, binds to folate and reduced folic acid derivatives and mediates delivery of 5-methyltetrahydrofolate and folate analogs into the interior of cells. Has high affinity for folate and folic acid analogs at neutral pH. Exposure to slightly acidic pH after receptor endocytosis triggers a conformation change that strongly reduces its affinity for folates and mediates their release. Required for normal embryonic development and normal cell proliferation. In Homo sapiens (Human), this protein is Folate receptor alpha (FOLR1).